The chain runs to 548 residues: Biotin-dependent acetyl-/propionyl-coenzyme A carboxylase beta5 subunit (548 aa).

The disordered stretch occupies residues 1-23 (MTSVTDRSAHSAERSTEHTIDIH). The span at 7 to 21 (RSAHSAERSTEHTID) shows a compositional bias: basic and acidic residues. A CoA carboxyltransferase N-terminal domain is found at 25–281 (TAGKLAELHK…NNSTDAPRYQ (257 aa)). In terms of domain architecture, CoA carboxyltransferase C-terminal spans 295-541 (DEDLELDTLI…ERKIAQLPPK (247 aa)).

Belongs to the AccD/PCCB family. In terms of assembly, forms homohexamers. The biotin-dependent acyl-CoA carboxylase complex is composed of AccA3, which contains the biotin carboxylase (BC) and biotin carboxyl carrier protein (BCCP) domains, and AccD5, which contains the carboxyl transferase (CT) domain. The AccA3/AccD5 complex forms a dodecamer, and can associate with the epsilon subunit AccE5 (Rv3280), which stimulates carboxylation by the complex. Is also part of the long-chain acyl-CoA carboxylase (LCC) complex, which is composed of AccA3, AccD4, AccD5 and AccE5. The four subunits are essential for activity, but AccD5, together with AccE5, probably plays a structural role rather than a catalytic one.

It catalyses the reaction N(6)-carboxybiotinyl-L-lysyl-[protein] + acetyl-CoA = N(6)-biotinyl-L-lysyl-[protein] + malonyl-CoA. It carries out the reaction N(6)-carboxybiotinyl-L-lysyl-[protein] + propanoyl-CoA = methylmalonyl-CoA + N(6)-biotinyl-L-lysyl-[protein]. It functions in the pathway lipid metabolism; mycolic acid biosynthesis. Its activity is regulated as follows. Carboxylase activity of the AccA3/AccD5 complex is stimulated by interaction with AccE5. Component of a biotin-dependent acyl-CoA carboxylase complex. This subunit transfers the CO2 from carboxybiotin to the CoA ester substrate. When associated with the alpha3 subunit AccA3, is involved in the carboxylation of acetyl-CoA and propionyl-CoA, with a preference for propionyl-CoA. Is also required for the activity of the long-chain acyl-CoA carboxylase (LCC) complex. This chain is Biotin-dependent acetyl-/propionyl-coenzyme A carboxylase beta5 subunit, found in Mycobacterium tuberculosis (strain ATCC 25618 / H37Rv).